Here is a 650-residue protein sequence, read N- to C-terminus: MSILESVHGPRDLDRLTERELDQLAAEVRAFLVANVAKTGGHLGPNLGVVETTIAIHRVFDSPRDAIVFDTGHQSYVHKLLTGRQDFSRLRQKGGLAGYPQRSESEHDIVESSHASSSLSWADGISRAFEMTGQDDRHVVAVVGDGALTGGMTWEALNNISDDNNRRLIIVVNDNGRSYAPTIGGMARFLNTVRTRRSYRSLYLTSRKAFEKLGGPGQSLYRGIRGGLHGFLSRFSDNEALYSNLDIKYIGPVHGHDIGAMEEALRQAKNYGAPVIVHAITQKGRGYEPALRDIADQFHAVGQIDPETGDPIGSPAKPNWTGVFAEEIVALAEENPKLVGITAAMLRPTGLHRFAERFPDRVYDVGIAEQHAVTSAAGLAFGGLHPVVAIYATFMNRAFDQVLMDVALHKAGVTFVLDRAGVTGPDGPSHHGIWDLAILQVVPGIRLAAPRDATRFREELAEAVAVADAPTVLRFPKGSVPADIEAVRRRDDGVDVLHESDQKDVLLVTVGPMAGLGLRVAEALAAQGIGATVVDPRWVVPVPRSVLDLAAGHRIVVTMEDGIRVGGIGTRVRQDLREAGIDTAVDELGLPDEFIDHATRDEILDDAGLTPQKIARDLVAQVLGSRVPIARPLPVEEFTEPSPERKKRRA.

Thiamine diphosphate is bound by residues His-73 and 113 to 115; that span reads SHA. Residue Asp-145 coordinates Mg(2+). Thiamine diphosphate is bound by residues 146–147, Asn-175, Tyr-287, and Glu-369; that span reads GA. Mg(2+) is bound at residue Asn-175.

The protein belongs to the transketolase family. DXPS subfamily. As to quaternary structure, homodimer. Mg(2+) is required as a cofactor. The cofactor is thiamine diphosphate.

The catalysed reaction is D-glyceraldehyde 3-phosphate + pyruvate + H(+) = 1-deoxy-D-xylulose 5-phosphate + CO2. The protein operates within metabolic intermediate biosynthesis; 1-deoxy-D-xylulose 5-phosphate biosynthesis; 1-deoxy-D-xylulose 5-phosphate from D-glyceraldehyde 3-phosphate and pyruvate: step 1/1. In terms of biological role, catalyzes the acyloin condensation reaction between C atoms 2 and 3 of pyruvate and glyceraldehyde 3-phosphate to yield 1-deoxy-D-xylulose-5-phosphate (DXP). This is 1-deoxy-D-xylulose-5-phosphate synthase from Leifsonia xyli subsp. xyli (strain CTCB07).